Consider the following 155-residue polypeptide: Large ribosomal subunit protein eL24 (155 aa).

Basic and acidic residues predominate over residues 98–129 (PEVRKAKRDDKAKADKEKKKADKAARKAEKAK). Residues 98-155 (PEVRKAKRDDKAKADKEKKKADKAARKAEKAKLAAAQGSKVSKQQAKGAFQKVAATSR) are disordered.

This sequence belongs to the eukaryotic ribosomal protein eL24 family.

In Candida glabrata (strain ATCC 2001 / BCRC 20586 / JCM 3761 / NBRC 0622 / NRRL Y-65 / CBS 138) (Yeast), this protein is Large ribosomal subunit protein eL24 (RPL24).